Consider the following 605-residue polypeptide: Glucose oxidase (605 aa).

The signal sequence occupies residues 1 to 16 (MQTLLVSSLVVSLAAA). Positions 51 and 52 each coordinate FAD. An N-linked (GlcNAc...) asparagine glycan is attached at Asn-65. Glu-72 serves as a coordination point for FAD. Asn-111 carries an N-linked (GlcNAc...) asparagine glycan. Residues Ser-125, Asn-129, Gly-130, and Thr-132 each coordinate FAD. Asn-183 and Asn-190 each carry an N-linked (GlcNAc...) asparagine glycan. Cys-186 and Cys-228 are disulfide-bonded. Val-272 is an FAD binding site. 4 N-linked (GlcNAc...) asparagine glycosylation sites follow: Asn-280, Asn-377, Asn-410, and Asn-495. The Proton acceptor role is filled by His-538. O2 contacts are provided by Arg-559 and Val-560. FAD-binding residues include Gly-571 and Met-583.

This sequence belongs to the GMC oxidoreductase family. In terms of assembly, homodimer. FAD serves as cofactor. The N-linked sugar chains of the glucose oxidase contributed to the high solubility of the enzyme in water.

Its subcellular location is the secreted. It localises to the cell wall. It is found in the cytoplasm. The protein localises to the extracellular space. The protein resides in the extracellular matrix. It carries out the reaction beta-D-glucose + O2 = D-glucono-1,5-lactone + H2O2. Functionally, glucose oxidase catalyzes the oxidation of beta-D-glucose to D-glucono-delta-lactone and hydrogen peroxide in the presence of molecular oxygen. D-glucono-delta-lactone is sequentially hydrolyzed by lactonase to D-gluconic acid, and the resulting hydrogen peroxide is hydrolyzed by catalase to oxygen and water. The activity shows high specificity to beta-D-glucose, with very low to no activity towards L-glucose, 2-deoxy-D-glucose, 3-deoxy-D-glucose, 4-deoxy-D-glucose, 5-deoxy-D-glucose, 6-deoxy-D-glucose, 3-O-methyl-D-glucose, 4-O-methyl-D-glucose, 6-O-methyl-D-glucose, 4,6-O-benzylidene-D-glucose, 5-thio-5-deoxy-D-glucose, D-mannose, D-allose, D-galactose, D-fructose, D-arabinose, D-xylose, trehalose, melibiose, L-mannomethylose, lactose, sucrose or 1,5-anhydro-D-glucitol. This is Glucose oxidase from Aspergillus niger.